A 355-amino-acid polypeptide reads, in one-letter code: Small ribosomal subunit biogenesis GTPase RsgA 1 (355 aa).

One can recognise a CP-type G domain in the interval 103-262; it reads GRVADRQAIA…LIDTPGVREF (160 aa). GTP-binding positions include 152 to 155 and 204 to 212; these read NKAD and GSSGVGKSS. The Zn(2+) site is built by Cys-285, Cys-290, His-292, and Cys-298.

Belongs to the TRAFAC class YlqF/YawG GTPase family. RsgA subfamily. In terms of assembly, monomer. Associates with 30S ribosomal subunit, binds 16S rRNA. It depends on Zn(2+) as a cofactor.

It localises to the cytoplasm. Functionally, one of several proteins that assist in the late maturation steps of the functional core of the 30S ribosomal subunit. Helps release RbfA from mature subunits. May play a role in the assembly of ribosomal proteins into the subunit. Circularly permuted GTPase that catalyzes slow GTP hydrolysis, GTPase activity is stimulated by the 30S ribosomal subunit. The protein is Small ribosomal subunit biogenesis GTPase RsgA 1 of Bacteroides thetaiotaomicron (strain ATCC 29148 / DSM 2079 / JCM 5827 / CCUG 10774 / NCTC 10582 / VPI-5482 / E50).